The chain runs to 397 residues: Glycine betaine/carnitine transport ATP-binding protein GbuA (397 aa).

The ABC transporter domain occupies 28-264; sequence KSKTDILKET…PANEYVEKFI (237 aa). 60 to 67 contacts ATP; it reads GLSGSGKS. 2 CBS domains span residues 279-335 and 340-395; these read MIRP…NITS and LHRD…EVNV.

This sequence belongs to the ABC transporter superfamily. In terms of assembly, the complex is composed of two ATP-binding proteins (GbuA), two transmembrane proteins (GbuB) and a solute-binding protein (GbuC).

The enzyme catalyses a quaternary ammonium(out) + ATP + H2O = a quaternary ammonium(in) + ADP + phosphate + H(+). Its activity is regulated as follows. The complex is activated by an osmotic gradient or by low temperature. In terms of biological role, part of the ABC transporter complex GbuABC involved in glycine betaine uptake. Responsible for energy coupling to the transport system. Involved, with BetL and OpuC, in osmoprotection and cryoprotection of Listeria. Can also uptake carnitine when carnitine is abundant in the growth medium. The polypeptide is Glycine betaine/carnitine transport ATP-binding protein GbuA (gbuA) (Listeria monocytogenes serotype 1/2a (strain 10403S)).